A 253-amino-acid polypeptide reads, in one-letter code: Triosephosphate isomerase (253 aa).

9 to 11 (NWK) is a binding site for substrate. Histidine 97 (electrophile) is an active-site residue. The active-site Proton acceptor is the glutamate 169. Residues glycine 175, serine 215, and 236–237 (GG) each bind substrate.

Belongs to the triosephosphate isomerase family. As to quaternary structure, homodimer.

It is found in the cytoplasm. The enzyme catalyses D-glyceraldehyde 3-phosphate = dihydroxyacetone phosphate. It functions in the pathway carbohydrate biosynthesis; gluconeogenesis. It participates in carbohydrate degradation; glycolysis; D-glyceraldehyde 3-phosphate from glycerone phosphate: step 1/1. Involved in the gluconeogenesis. Catalyzes stereospecifically the conversion of dihydroxyacetone phosphate (DHAP) to D-glyceraldehyde-3-phosphate (G3P). The sequence is that of Triosephosphate isomerase from Staphylococcus aureus (strain Mu50 / ATCC 700699).